Consider the following 569-residue polypeptide: MAAASNLSTLSSSSLSKPSSSFPFRNTPTNNNASFLHNKSLPNQNSLSHKLSSPLPLACNPKNQNTCVFFDDEDQKPREECGVVGIYGDPEASRLCSLALHALQHRGQEGAGIVAVHDNHLQSVTGVGLVSDVFEQSKLSRLPGTSAIGHVRYSTAGQSMLKNVQPFLADYRFAAVAVAHNGNFVNYRSLRARLEHNNGSIFNTTSDTEVVLHLIATSKHRPFLLRIVDACEHLQGAYSLVFVTEDKLVAVRDPFGFRPLVMGRRTNGAVVLASETCALDLIEATYEREVYPGEVIVVDHTGIQSLCLVSHPEPKQCIFEHIYFALPNSVVFGRSVYESRKKFGEILASESPVECDVVIAVPDSGVVAALGYAAKAGVPFQQGLIRSHYVGRTFIEPSQKIRDFGVKLKLSPVHAVLEGKRVVVVDDSIVRGTTSSKIVRLLKEAGAKEVHMRIACPPIVASCYYGVDTPSSEELISNRMSVEEIRKFIGSDSLAFLPLDKLKTLLGDDALNYCYACFSGKYPVEPEELQMKRLGVAHFNWDDDFNGNFESIDVGGWVTNQDGFKIGSV.

Residues 1–21 (MAAASNLSTLSSSSLSKPSSS) are compositionally biased toward low complexity. The segment at 1–51 (MAAASNLSTLSSSSLSKPSSSFPFRNTPTNNNASFLHNKSLPNQNSLSHKL) is disordered. A chloroplast-targeting transit peptide spans 1–80 (MAAASNLSTL…DDEDQKPREE (80 aa)). The span at 22-45 (FPFRNTPTNNNASFLHNKSLPNQN) shows a compositional bias: polar residues. Cys81 (nucleophile) is an active-site residue. One can recognise a Glutamine amidotransferase type-2 domain in the interval 81-301 (CGVVGIYGDP…PGEVIVVDHT (221 aa)). Cys317 provides a ligand contact to [4Fe-4S] cluster. Residues Ser364, Asp426, and Asp427 each coordinate Mg(2+). Positions 463, 514, and 517 each coordinate [4Fe-4S] cluster.

This sequence in the C-terminal section; belongs to the purine/pyrimidine phosphoribosyltransferase family. Mg(2+) is required as a cofactor. Requires [4Fe-4S] cluster as cofactor.

It localises to the plastid. Its subcellular location is the chloroplast. The enzyme catalyses 5-phospho-beta-D-ribosylamine + L-glutamate + diphosphate = 5-phospho-alpha-D-ribose 1-diphosphate + L-glutamine + H2O. The protein operates within purine metabolism; IMP biosynthesis via de novo pathway; N(1)-(5-phospho-D-ribosyl)glycinamide from 5-phospho-alpha-D-ribose 1-diphosphate: step 1/2. This is Amidophosphoribosyltransferase, chloroplastic (PUR1) from Glycine max (Soybean).